The primary structure comprises 681 residues: MKKYIFNHVFFFLMLCGSNYLYSQDPWKLSADKPDSNNYYGETVANGMIGIISSPEPLKVKEVVLAGTYDIYKRGRVSSFIPNYNLLNMKLAFNGESVQTYNINNYKQELDMRNGAFTGSFQFKDLATVTYSYYALRHLPHCIMMVVNINTQKDTEINVENLLETPSSLNNQQNYFQNITNTHVNIPLLTSVAFTPTGRSKIAVSNTFLFDEGKKLQPEILHRMNDADMHAMSFDKKIKAGKTYSFALIGSLISSDHINDPYNEAERLTIYAALEGKSRLLNRHMQEWNSLWQSDIQVEGDPQAQQDIRSMLYHLYSFTRKSTSLSPSPMGLSGLGYNGHVFWDTEIWMFPPMLLLHPEIAKSMIEYRYQRLDAARKKAAIYGYDGAMFPWESADSGAEETPVNALTGAFEHHVTGDVAIAAWQYYLVTGDKEWLKEKGWPILKATAEFWASRVEKNDKGEYEIKNVVAADEWAENIDNNAYTNGTAIRNLQYASKCATVLGVIAPKEWTLIADKILISKMSNGVTREHDSYTDQNIKQADANLLAYPLKLITDKEQIERDLKYYQTKIPQSDTPAMTQAIFSLLYSRLEDSDQAYHWFKDAYQPNLNPPFRVISECKGGTNPYFSTGAGGVLQAVIMGFGGLDIDAAGGIKQVKSVLPKNWKKLTITGIGIEKKTFVLTH.

The N-terminal stretch at 1–23 is a signal peptide; that stretch reads MKKYIFNHVFFFLMLCGSNYLYS. Beta-D-glucose contacts are provided by Arg74, Trp343, Asp344, Trp391, Glu392, Thr407, Glu472, Trp473, Lys538, Gln539, and Asp573. Glu472 functions as the Proton donor in the catalytic mechanism. Glu616 acts as the Proton acceptor in catalysis.

This sequence belongs to the glycosyl hydrolase 65 family. As to quaternary structure, homohexamer; dimer of trimers.

It localises to the periplasm. It carries out the reaction kojibiose + H2O = beta-D-glucose + D-glucose. Its function is as follows. Glycosidase that specifically hydrolyzes kojibiose to beta-glucose and glucose. Also hydrolyzes, with lower catalytic efficiency, longer kojioligosaccharides (from kojitriose to kojipentaose) and shorter oligosaccharides produced by the degradation of dextran-containing alpha-1,2 branches. Probably acts on alpha-(1-&gt;2)-glucosyl isomaltooligosaccharides. Shows weak activity with nigerose but has no activity toward p-nitrophenyl alpha-glucopyranoside, which is a general substrate of exo-acting alpha-glucoside hydrolases. Has a strict specificity for alpha-1,2-glucosidic linkages. Catalyzes the hydrolytic reaction via an anomer-inverting mechanism. The polypeptide is Kojibiose hydrolase (Flavobacterium johnsoniae (strain ATCC 17061 / DSM 2064 / JCM 8514 / BCRC 14874 / CCUG 350202 / NBRC 14942 / NCIMB 11054 / UW101) (Cytophaga johnsonae)).